The primary structure comprises 55 residues: Large ribosomal subunit protein bL33 (55 aa).

It belongs to the bacterial ribosomal protein bL33 family.

The polypeptide is Large ribosomal subunit protein bL33 (Bordetella avium (strain 197N)).